A 249-amino-acid polypeptide reads, in one-letter code: Cell surface glycoprotein CD200 receptor 2 (249 aa).

The signal sequence occupies residues 1 to 24; sequence MHALGRTPALTLLIFIYNFVSVYT. The Ig-like V-type domain maps to 25 to 124; it reads IVSVQMGTKA…GNFHKVYDLQ (100 aa). Residues 25 to 220 are Extracellular-facing; that stretch reads IVSVQMGTKA…TTSTTPSLLT (196 aa). Cysteine 38 and cysteine 108 form a disulfide bridge. N-linked (GlcNAc...) asparagine glycosylation is found at asparagine 73, asparagine 138, and asparagine 171. The region spanning 113-208 is the Ig-like C2-type domain; sequence PEGNFHKVYD…GNQSLSIELS (96 aa). Cysteine 143 and cysteine 192 are joined by a disulfide. A helical transmembrane segment spans residues 221 to 241; sequence ILYVKMVLLGIILLKVGFAFF. Topologically, residues 242-249 are cytoplasmic; the sequence is QKRNVTRT.

It belongs to the CD200R family. Expressed in bone marrow, spleen, brain, lung, testis and thymus.

It is found in the membrane. Its function is as follows. According to PubMed:15187158 it is a receptor for the CD200 cell surface glycoprotein. According to PubMed:16081818 it is not a receptor for the CD200/OX2 cell surface glycoprotein. Involved in the recruitment or surface expression of the TYROBP receptor. The protein is Cell surface glycoprotein CD200 receptor 2 (Cd200r1l) of Mus musculus (Mouse).